The sequence spans 184 residues: Probable RNA 2'-phosphotransferase (184 aa).

This sequence belongs to the KptA/TPT1 family.

In terms of biological role, removes the 2'-phosphate from RNA via an intermediate in which the phosphate is ADP-ribosylated by NAD followed by a presumed transesterification to release the RNA and generate ADP-ribose 1''-2''-cyclic phosphate (APPR&gt;P). May function as an ADP-ribosylase. This chain is Probable RNA 2'-phosphotransferase, found in Escherichia coli O139:H28 (strain E24377A / ETEC).